We begin with the raw amino-acid sequence, 678 residues long: THO complex subunit 5 homolog A (678 aa).

Disordered stretches follow at residues 1 to 35 (MASDSLKKRKPKVNRNEDVKRGRHEDQEGRYYSEE) and 294 to 329 (ALFKPPEDSQDDESDSDAEEEQTTKRRRPTLGVQLD). The short motif at 7-10 (KKRK) is the Nuclear localization signal element. The span at 14-35 (NRNEDVKRGRHEDQEGRYYSEE) shows a compositional bias: basic and acidic residues. Residues 301–314 (DSQDDESDSDAEEE) are compositionally biased toward acidic residues.

This sequence belongs to the THOC5 family. As to quaternary structure, component of the THO subcomplex, which is composed of thoc1, thoc2, thoc3, thoc5, thoc6 and thoc7. Component of the transcription/export (TREX) complex at least composed of alyref/thoc4, ddx39b, sarnp/cip29, chtop and the THO subcomplex. Interacts with thoc7.

Its subcellular location is the nucleus. It localises to the nucleus speckle. The protein localises to the cytoplasm. Functionally, component of the THO subcomplex of the TREX complex which is thought to couple mRNA transcription, processing and nuclear export, and which specifically associates with spliced mRNA and not with unspliced pre-mRNA. Plays a key structural role in the oligomerization of the THO-ddx39b complex. TREX is recruited to spliced mRNAs by a transcription-independent mechanism, binds to mRNA upstream of the exon-junction complex (EJC) and is recruited in a splicing- and cap-dependent manner to a region near the 5' end of the mRNA where it functions in mRNA export to the cytoplasm via the TAP/NXF1 pathway. May be involved in cell differentiation. In Xenopus laevis (African clawed frog), this protein is THO complex subunit 5 homolog A (thoc5-a).